The sequence spans 358 residues: Fructose-bisphosphate aldolase 1, cytoplasmic (358 aa).

Arginine 39 contributes to the substrate binding site. Residue glutamate 183 is the Proton acceptor of the active site. Lysine 225 acts as the Schiff-base intermediate with dihydroxyacetone-P in catalysis. Substrate is bound by residues 266 to 268 (SGG) and arginine 298.

The protein belongs to the class I fructose-bisphosphate aldolase family. As to quaternary structure, homotetramer. In terms of tissue distribution, expressed in callus.

The protein resides in the cytoplasm. Its subcellular location is the cytosol. It carries out the reaction beta-D-fructose 1,6-bisphosphate = D-glyceraldehyde 3-phosphate + dihydroxyacetone phosphate. It functions in the pathway carbohydrate degradation; glycolysis; D-glyceraldehyde 3-phosphate and glycerone phosphate from D-glucose: step 4/4. Functionally, fructose-bisphosphate aldolase that plays a key role in glycolysis and gluconeogenesis. Involved in gibberellin-mediated root growth. May be regulated by CDPK13. Associates with vacuolar proton ATPase (V-ATPase) and may regulate the V-ATPase-mediated control of root cell elongation. In Oryza sativa subsp. japonica (Rice), this protein is Fructose-bisphosphate aldolase 1, cytoplasmic.